An 82-amino-acid polypeptide reads, in one-letter code: Photosystem I iron-sulfur center (82 aa).

4Fe-4S ferredoxin-type domains follow at residues 2 to 31 (AHSV…MVPW) and 40 to 69 (IAAA…IRVY). The [4Fe-4S] cluster site is built by cysteine 11, cysteine 14, cysteine 17, cysteine 21, cysteine 49, cysteine 52, cysteine 55, and cysteine 59.

The cyanobacterial PSI reaction center is composed of one copy each of PsaA,B,C,D,E,F,I,J,K,L,M and X, and forms trimeric complexes. [4Fe-4S] cluster is required as a cofactor.

The protein resides in the cellular thylakoid membrane. The enzyme catalyses reduced [plastocyanin] + hnu + oxidized [2Fe-2S]-[ferredoxin] = oxidized [plastocyanin] + reduced [2Fe-2S]-[ferredoxin]. Its function is as follows. Apoprotein for the two 4Fe-4S centers FA and FB of photosystem I (PSI); essential for photochemical activity. FB is the terminal electron acceptor of PSI, donating electrons to ferredoxin. The C-terminus interacts with PsaA/B/D and helps assemble the protein into the PSI complex. Required for binding of PsaD and PsaE to PSI. PSI is a plastocyanin/cytochrome c6-ferredoxin oxidoreductase, converting photonic excitation into a charge separation, which transfers an electron from the donor P700 chlorophyll pair to the spectroscopically characterized acceptors A0, A1, FX, FA and FB in turn. The chain is Photosystem I iron-sulfur center from Synechococcus sp. (strain JA-2-3B'a(2-13)) (Cyanobacteria bacterium Yellowstone B-Prime).